The sequence spans 133 residues: Peptide methionine sulfoxide reductase MsrB (133 aa).

Basic and acidic residues predominate over residues 1-12; sequence MSEKVQKSEHEW. The disordered stretch occupies residues 1 to 36; it reads MSEKVQKSEHEWQQQLTPEQYRVTREKGTERPFTGD. Residues 9-132 form the MsrB domain; it reads EHEWQQQLTP…NSVSLDFHPG (124 aa). Residues C48, C51, C97, and C100 each coordinate Zn(2+). Catalysis depends on C121, which acts as the Nucleophile.

Belongs to the MsrB Met sulfoxide reductase family. Requires Zn(2+) as cofactor.

The catalysed reaction is L-methionyl-[protein] + [thioredoxin]-disulfide + H2O = L-methionyl-(R)-S-oxide-[protein] + [thioredoxin]-dithiol. This Chromohalobacter salexigens (strain ATCC BAA-138 / DSM 3043 / CIP 106854 / NCIMB 13768 / 1H11) protein is Peptide methionine sulfoxide reductase MsrB.